Consider the following 466-residue polypeptide: Glutamate-1-semialdehyde 2,1-aminomutase (466 aa).

N6-(pyridoxal phosphate)lysine is present on Lys-292.

The protein belongs to the class-III pyridoxal-phosphate-dependent aminotransferase family. HemL subfamily. Homodimer. Pyridoxal 5'-phosphate serves as cofactor.

The protein resides in the cytoplasm. It carries out the reaction (S)-4-amino-5-oxopentanoate = 5-aminolevulinate. Its pathway is porphyrin-containing compound metabolism; protoporphyrin-IX biosynthesis; 5-aminolevulinate from L-glutamyl-tRNA(Glu): step 2/2. The chain is Glutamate-1-semialdehyde 2,1-aminomutase from Tropheryma whipplei (strain TW08/27) (Whipple's bacillus).